The chain runs to 449 residues: 4-aminobutyrate aminotransferase (449 aa).

Lys-294 carries the post-translational modification N6-(pyridoxal phosphate)lysine.

It belongs to the class-III pyridoxal-phosphate-dependent aminotransferase family. It depends on pyridoxal 5'-phosphate as a cofactor.

It carries out the reaction 4-aminobutanoate + 2-oxoglutarate = succinate semialdehyde + L-glutamate. The enzyme catalyses (S)-3-amino-2-methylpropanoate + 2-oxoglutarate = 2-methyl-3-oxopropanoate + L-glutamate. It functions in the pathway amino-acid degradation; 4-aminobutanoate degradation. The protein is 4-aminobutyrate aminotransferase (gabT) of Mycobacterium bovis (strain ATCC BAA-935 / AF2122/97).